A 428-amino-acid polypeptide reads, in one-letter code: Dihydroorotase (428 aa).

Residues histidine 60 and histidine 62 each coordinate Zn(2+). Substrate is bound by residues 62–64 and asparagine 94; that span reads HLR. Aspartate 152, histidine 179, and histidine 232 together coordinate Zn(2+). Asparagine 278 is a binding site for substrate. Zn(2+) is bound at residue aspartate 305. Residue aspartate 305 is part of the active site. Residues histidine 309 and 323–324 each bind substrate; that span reads FG.

It belongs to the metallo-dependent hydrolases superfamily. DHOase family. Class I DHOase subfamily. Zn(2+) serves as cofactor.

The enzyme catalyses (S)-dihydroorotate + H2O = N-carbamoyl-L-aspartate + H(+). Its pathway is pyrimidine metabolism; UMP biosynthesis via de novo pathway; (S)-dihydroorotate from bicarbonate: step 3/3. Catalyzes the reversible cyclization of carbamoyl aspartate to dihydroorotate. This Anoxybacillus flavithermus (strain DSM 21510 / WK1) protein is Dihydroorotase.